We begin with the raw amino-acid sequence, 273 residues long: tRNA pseudouridine synthase B (273 aa).

Catalysis depends on Asp-38, which acts as the Nucleophile.

The protein belongs to the pseudouridine synthase TruB family. Type 1 subfamily.

It carries out the reaction uridine(55) in tRNA = pseudouridine(55) in tRNA. Its function is as follows. Responsible for synthesis of pseudouridine from uracil-55 in the psi GC loop of transfer RNAs. This Sulfurimonas denitrificans (strain ATCC 33889 / DSM 1251) (Thiomicrospira denitrificans (strain ATCC 33889 / DSM 1251)) protein is tRNA pseudouridine synthase B.